We begin with the raw amino-acid sequence, 178 residues long: MKLITNSAEIKVTENEDGSKSFQGIGSEVGVENRNGIVLTPNCIEFARERYPLLYEHGAGSSEVIGDAKVYYDLASNKYLTDFTLYDNAPNINKAVENGAFDSLSIAYYITDYEFNENDALVVNKAQFKEISLVSVPADPNAKFIQNALGEELTEERNKIIESRNALKEIEDIKKKYE.

Residues 146-178 (QNALGEELTEERNKIIESRNALKEIEDIKKKYE) are a coiled coil.

Belongs to the skunalikevirus capsid maturation protease family.

In terms of biological role, probable capsid maturation protease. The chain is Probable capsid maturation protease from Lactococcus lactis (Lactococcus lactis bacteriophage p2).